Reading from the N-terminus, the 121-residue chain is Dihydroneopterin aldolase (121 aa).

E16 and M111 together coordinate substrate.

The protein belongs to the archaeal dihydroneopterin aldolase family. In terms of assembly, homotetramer.

It carries out the reaction 7,8-dihydroneopterin = 6-hydroxymethyl-7,8-dihydropterin + glycolaldehyde. It functions in the pathway cofactor biosynthesis; 5,6,7,8-tetrahydromethanopterin biosynthesis. Functionally, catalyzes the conversion of 7,8-dihydroneopterin (H2Neo) to 6-hydroxymethyl-7,8-dihydropterin (6-HMD). This Methanopyrus kandleri (strain AV19 / DSM 6324 / JCM 9639 / NBRC 100938) protein is Dihydroneopterin aldolase.